The chain runs to 553 residues: Telomere repeat-binding protein 2 (553 aa).

A disordered region spans residues Ser-147 to Ser-170. A Ubiquitin-like domain is found at Val-285–Glu-364. Residues Ala-394–Gly-413 form a disordered region. The region spanning Ala-448–Arg-507 is the HTH myb-type domain. The segment at residues Trp-476–Val-503 is a DNA-binding region (H-T-H motif).

Homodimer and heterodimer with TRP1. Interacts with SNL1. As to expression, expressed ubiquitously. Highest expression in flowers and leaves.

It localises to the nucleus. Its function is as follows. Binds specifically to the plant telomeric double-stranded DNA sequences. At least 2 repeats of telomeric sequences are required for binding. Induces DNA bending. This Arabidopsis thaliana (Mouse-ear cress) protein is Telomere repeat-binding protein 2 (TRP2).